The sequence spans 760 residues: Catecholate siderophore receptor Fiu (760 aa).

The first 31 residues, 1–31 (MENNRNFPARQFHSLTFFAGLCIGITPVAQA), serve as a signal peptide directing secretion. One can recognise a TBDR plug domain in the interval 67 to 175 (PVADTTRTMT…PTGSINMISK (109 aa)). One can recognise a TBDR beta-barrel domain in the interval 180–760 (DSGIDASASI…TFLLTANMHF (581 aa)). Residues 743 to 760 (RYHPGEPRTFLLTANMHF) carry the TonB C-terminal box motif.

The protein belongs to the TonB-dependent receptor family.

It localises to the cell outer membrane. Involved in the active transport across the outer membrane of iron complexed with catecholate siderophores such as dihydroxybenzoylserine and dihydroxybenzoate. It derives its energy for transport by interacting with the trans-periplasmic membrane protein TonB. Can also transport catechol-substituted cephalosporins. Receptor for microcins M, H47 and E492. This chain is Catecholate siderophore receptor Fiu (fiu), found in Escherichia coli O157:H7.